Reading from the N-terminus, the 177-residue chain is Large ribosomal subunit protein uL6 (177 aa).

This sequence belongs to the universal ribosomal protein uL6 family. As to quaternary structure, part of the 50S ribosomal subunit.

In terms of biological role, this protein binds to the 23S rRNA, and is important in its secondary structure. It is located near the subunit interface in the base of the L7/L12 stalk, and near the tRNA binding site of the peptidyltransferase center. The protein is Large ribosomal subunit protein uL6 of Roseobacter denitrificans (strain ATCC 33942 / OCh 114) (Erythrobacter sp. (strain OCh 114)).